Consider the following 1018-residue polypeptide: Thrombospondin type-1 domain-containing protein 4 (1018 aa).

The first 25 residues, 1–25, serve as a signal peptide directing secretion; sequence MVSHFMGSLSVLCFLLLLGFQFVCP. The TSP type-1 1 domain occupies 53-307; the sequence is PGVWGAWGPW…YKLCNTNVCP (255 aa). Disordered regions lie at residues 111 to 235, 254 to 279, and 534 to 623; these read SVPL…RSGL, PAAS…ATQS, and SPQV…NWKQ. Residues 187 to 200 show a composition bias toward basic residues; that stretch reads QRLRRQKLSSRHSR. Low complexity predominate over residues 201–210; the sequence is SQGASSARHG. The segment covering 259–279 has biased composition (polar residues); the sequence is LFHSPETSNNHGVGTHGATQS. Basic and acidic residues-rich tracts occupy residues 556–577 and 592–603; these read RSQE…RGEA and RHPDRFSPHRPD. 5 TSP type-1 domains span residues 676–737, 739–792, 793–851, 852–911, and 912–968; these read CPAF…KICS, WQIR…DMGP, CAKS…GPCT, GKVE…HLKP, and CGAK…QDCV. The region spanning 971-1008 is the PLAC domain; sequence VDENCKDKYYNCNVVVQARLCVYNYYKTACCASCTRVA.

As to quaternary structure, interacts with FBN1. May interact with TGFB1.

Its subcellular location is the secreted. The protein resides in the extracellular space. It is found in the extracellular matrix. Its function is as follows. Promotes FBN1 matrix assembly. Attenuates TGFB signaling, possibly by accelerating the sequestration of large latent complexes of TGFB or active TGFB by FBN1 microfibril assembly, thereby negatively regulating the expression of TGFB regulatory targets, such as POSTN. The sequence is that of Thrombospondin type-1 domain-containing protein 4 (THSD4) from Homo sapiens (Human).